Here is a 636-residue protein sequence, read N- to C-terminus: Basic helix-loop-helix ARNT-like protein 2 (636 aa).

The segment at 25-62 is disordered; that stretch reads VSSRVSPGTRPTAMGSFSSHMTEFPRKRKGSDSDPSQS. The interaction with PER2 stretch occupies residues 46 to 258; that stretch reads TEFPRKRKGS…SPREKLIDAK (213 aa). The Nuclear localization signal signature appears at 49-54; it reads PRKRKG. One can recognise a bHLH domain in the interval 107 to 160; it reads AFREAHSQTEKRRRDKMNNLIEELSAMIPQCNPMARKLDKLTVLRMAVQHLRSL. Positions 177–187 match the Nuclear export signal 1 motif; sequence LQDNELRHLIL. In terms of domain architecture, PAS 1 spans 178–250; sequence QDNELRHLIL…EQLSSFDISP (73 aa). Lys-287 participates in a covalent cross-link: Glycyl lysine isopeptide (Lys-Gly) (interchain with G-Cter in SUMO2 and SUMO3). Lys-294 is covalently cross-linked (Glycyl lysine isopeptide (Lys-Gly) (interchain with G-Cter in SUMO2)). The 71-residue stretch at 357–427 folds into the PAS 2 domain; it reads VPQNSGEINV…DKHKAVLQSK (71 aa). The Nuclear export signal 2 signature appears at 392–400; it reads LGYLPQELL. The region spanning 432 to 475 is the PAC domain; it reads TDSYKFRAKDGSFVTLKSQWFSFTNPWTKELEYIVSVNTLVLGH.

In terms of assembly, component of the circadian core oscillator, which includes the CRY proteins, CLOCK, or NPAS2, BMAL1 or BMAL2, CSNK1D and/or CSNK1E, TIMELESS and the PER proteins. Interacts directly with CLOCK to form the BMAL2-CLOCK transactivator. Can form heterodimers or homodimers which interact directly with CLOCK to form the transcription activator. Interacts with NPAS2 and HIF1A. Interacts with PER2. In terms of tissue distribution, expressed in fetal brain. Highly expressed in brain and placenta. Lower levels in heart, liver, thymus, kidney and lung. Located to endothelial cells and neuronal cells of the suprachiasmatic nucleus (SCN). Also detected in endothelial cells of the heart, lung and kidney. In the brain, specifically expressed in the thalamus, hippocampus and amygdala.

It localises to the nucleus. In terms of biological role, transcriptional activator which forms a core component of the circadian clock. The circadian clock, an internal time-keeping system, regulates various physiological processes through the generation of approximately 24 hour circadian rhythms in gene expression, which are translated into rhythms in metabolism and behavior. It is derived from the Latin roots 'circa' (about) and 'diem' (day) and acts as an important regulator of a wide array of physiological functions including metabolism, sleep, body temperature, blood pressure, endocrine, immune, cardiovascular, and renal function. Consists of two major components: the central clock, residing in the suprachiasmatic nucleus (SCN) of the brain, and the peripheral clocks that are present in nearly every tissue and organ system. Both the central and peripheral clocks can be reset by environmental cues, also known as Zeitgebers (German for 'timegivers'). The predominant Zeitgeber for the central clock is light, which is sensed by retina and signals directly to the SCN. The central clock entrains the peripheral clocks through neuronal and hormonal signals, body temperature and feeding-related cues, aligning all clocks with the external light/dark cycle. Circadian rhythms allow an organism to achieve temporal homeostasis with its environment at the molecular level by regulating gene expression to create a peak of protein expression once every 24 hours to control when a particular physiological process is most active with respect to the solar day. Transcription and translation of core clock components (CLOCK, NPAS2, BMAL1, BMAL2, PER1, PER2, PER3, CRY1 and CRY2) plays a critical role in rhythm generation, whereas delays imposed by post-translational modifications (PTMs) are important for determining the period (tau) of the rhythms (tau refers to the period of a rhythm and is the length, in time, of one complete cycle). A diurnal rhythm is synchronized with the day/night cycle, while the ultradian and infradian rhythms have a period shorter and longer than 24 hours, respectively. Disruptions in the circadian rhythms contribute to the pathology of cardiovascular diseases, cancer, metabolic syndromes and aging. A transcription/translation feedback loop (TTFL) forms the core of the molecular circadian clock mechanism. Transcription factors, CLOCK or NPAS2 and BMAL1 or BMAL2, form the positive limb of the feedback loop, act in the form of a heterodimer and activate the transcription of core clock genes and clock-controlled genes (involved in key metabolic processes), harboring E-box elements (5'-CACGTG-3') within their promoters. The core clock genes: PER1/2/3 and CRY1/2 which are transcriptional repressors form the negative limb of the feedback loop and interact with the CLOCK|NPAS2-BMAL1|BMAL2 heterodimer inhibiting its activity and thereby negatively regulating their own expression. This heterodimer also activates nuclear receptors NR1D1/2 and RORA/B/G, which form a second feedback loop and which activate and repress BMAL1 transcription, respectively. The CLOCK-BMAL2 heterodimer activates the transcription of SERPINE1/PAI1 and BHLHE40/DEC1. This is Basic helix-loop-helix ARNT-like protein 2 from Homo sapiens (Human).